The chain runs to 125 residues: Large ribosomal subunit protein bL17 (125 aa).

This sequence belongs to the bacterial ribosomal protein bL17 family. In terms of assembly, part of the 50S ribosomal subunit. Contacts protein L32.

This is Large ribosomal subunit protein bL17 from Acinetobacter baylyi (strain ATCC 33305 / BD413 / ADP1).